A 699-amino-acid chain; its full sequence is Polyribonucleotide nucleotidyltransferase (699 aa).

Asp-485 and Asp-491 together coordinate Mg(2+). The KH domain maps to 552 to 611 (PRITTIKINPEKIRDVIGKGGAVIRALTEETGTTIELEDDGTVKIASSNGEATKEAIRRI). In terms of domain architecture, S1 motif spans 621–689 (GRIYNGKVIR…RQGRVRLSIK (69 aa)).

This sequence belongs to the polyribonucleotide nucleotidyltransferase family. In terms of assembly, component of the RNA degradosome, which is a multiprotein complex involved in RNA processing and mRNA degradation. Mg(2+) is required as a cofactor.

It is found in the cytoplasm. The catalysed reaction is RNA(n+1) + phosphate = RNA(n) + a ribonucleoside 5'-diphosphate. Involved in mRNA degradation. Catalyzes the phosphorolysis of single-stranded polyribonucleotides processively in the 3'- to 5'-direction. The polypeptide is Polyribonucleotide nucleotidyltransferase (Shewanella sp. (strain MR-7)).